The following is a 311-amino-acid chain: Pyrimidine-specific ribonucleoside hydrolase RihA (311 aa).

His240 is an active-site residue.

It belongs to the IUNH family. RihA subfamily.

In terms of biological role, hydrolyzes with equal efficiency cytidine or uridine to ribose and cytosine or uracil, respectively. In Escherichia coli O8 (strain IAI1), this protein is Pyrimidine-specific ribonucleoside hydrolase RihA.